The following is a 104-amino-acid chain: Large ribosomal subunit protein bL21 (104 aa).

It belongs to the bacterial ribosomal protein bL21 family. As to quaternary structure, part of the 50S ribosomal subunit. Contacts protein L20.

Its function is as follows. This protein binds to 23S rRNA in the presence of protein L20. The protein is Large ribosomal subunit protein bL21 of Thermodesulfovibrio yellowstonii (strain ATCC 51303 / DSM 11347 / YP87).